Reading from the N-terminus, the 184-residue chain is Ribosome-recycling factor (184 aa).

Residues 134 to 167 form a disordered region; sequence MNDQLKKDEKNGDITEDELRSGTEDVQKATDNSI.

The protein belongs to the RRF family.

Its subcellular location is the cytoplasm. Functionally, responsible for the release of ribosomes from messenger RNA at the termination of protein biosynthesis. May increase the efficiency of translation by recycling ribosomes from one round of translation to another. The polypeptide is Ribosome-recycling factor (Staphylococcus aureus (strain Mu3 / ATCC 700698)).